A 612-amino-acid chain; its full sequence is MDYAEMLDRQKHIRNFSIIAHIDHGKSTLADRILEMTDTIAKRDMQAQVLDDMELERERGITIKLNAVELHYHAKDGETYIFHLIDTPGHVDFSYEVSRSLAACEGALLVVDAAQGVEAQTLANVYLAVDDDLEIVPVINKIDLPSAQPDVVKAEIEEMIGLDASEAVLASAKSGIGIEEILEKLVTDVPAPTGDLEAPLKALIFDSNYDSYRGVVLNIRVVDGTVKVGDKIRLMNSGKEFEVTEVGVMSPKAVKRDFLMVGDVGYITASIKTIQDTRVGDTVTLADNPADAPLDGYRHIQPMVYSGMYPVDNAKFNDLREALEKLQLNDAALEFEPESSQALGFGFRCGFLGLLHMDVVQERLEREFNLDLIMTAPSVDYHVALTDGTEEVIDNPSEMPETSNISEVKEPYVKASIMVPNDYVGAVMELAQRKRGEFVTMDYLDTYRVNVIYNMPLSEIIFDFFDDLKSNTKGYASFDYEVTGYRASDLVKIDILLNGEAVDALSFIVHRDFAFERSRVIVGKLKETIPRQQFEVPIQAAIGNKIIARSTVKAFRKNVLAKCYGGDITRKRKLLEKQKAGKKRMKSVGSVEVPQEAFMSILKMNDEDTKGK.

In terms of domain architecture, tr-type G spans 11-193 (KHIRNFSIIA…KLVTDVPAPT (183 aa)). Residues 23–28 (DHGKST) and 140–143 (NKID) contribute to the GTP site.

It belongs to the TRAFAC class translation factor GTPase superfamily. Classic translation factor GTPase family. LepA subfamily.

The protein resides in the cell membrane. The enzyme catalyses GTP + H2O = GDP + phosphate + H(+). Required for accurate and efficient protein synthesis under certain stress conditions. May act as a fidelity factor of the translation reaction, by catalyzing a one-codon backward translocation of tRNAs on improperly translocated ribosomes. Back-translocation proceeds from a post-translocation (POST) complex to a pre-translocation (PRE) complex, thus giving elongation factor G a second chance to translocate the tRNAs correctly. Binds to ribosomes in a GTP-dependent manner. The protein is Elongation factor 4 of Latilactobacillus sakei subsp. sakei (strain 23K) (Lactobacillus sakei subsp. sakei).